Reading from the N-terminus, the 62-residue chain is uncharacterized protein (62 aa).

This is an uncharacterized protein from Solanum tuberosum (Potato).